We begin with the raw amino-acid sequence, 35 residues long: Mu-theraphotoxin-Pm1a (35 aa).

3 disulfide bridges follow: Cys-3/Cys-17, Cys-10/Cys-22, and Cys-16/Cys-29. Phe-35 carries the post-translational modification Phenylalanine amide.

It belongs to the neurotoxin 10 (Hwtx-1) family. 62 (Vatx) subfamily. As to expression, expressed by the venom gland.

Its subcellular location is the secreted. Functionally, gating-modifier toxin with weak activity on Nav1.7/SCN9A and Nav1.8/SCN10A. Inhibits Nav1.7/SCN9A peak current (IC(50)=334 nM) and shifts the voltage dependence of activation to more depolarised membrane potentials. Shows 21% peak current inhibition (at 10 uM) on Nav1.8/SCN10A sodium channels. This is Mu-theraphotoxin-Pm1a from Poecilotheria metallica (Metallic blue ornamental tree spider).